The chain runs to 168 residues: GTP-dependent dephospho-CoA kinase (168 aa).

GTP-binding residues include D49, I50, V51, D68, K70, and E120.

It belongs to the GTP-dependent DPCK family.

It catalyses the reaction 3'-dephospho-CoA + GTP = GDP + CoA + H(+). Its pathway is cofactor biosynthesis; coenzyme A biosynthesis. Catalyzes the GTP-dependent phosphorylation of the 3'-hydroxyl group of dephosphocoenzyme A to form coenzyme A (CoA). The chain is GTP-dependent dephospho-CoA kinase from Pyrobaculum islandicum (strain DSM 4184 / JCM 9189 / GEO3).